A 554-amino-acid chain; its full sequence is MSEAEARPTNFIRQIIDEDLASGKHTTVHTRFPPEPNGYLHIGHAKSICLNFGIAQDYKGQCNLRFDDTNPVKEDIEYVDSIKNDVEWLGFHWSGNVRYSSDYFDQLHAYAIELINKGLAYVDELTPEQIREYRGTLTQPGKNSPYRDRSVEENLALFEKMRTGGFEEGKACLRAKIDMASPFIVMRDPVLYRIKFAEHHQTGNKWCIYPMYDFTHCISDALEGITHSLCTLEFQDNRRLYDWVLDNITIPVHPRQYEFSRLNLEYTVMSKRKLNLLVTDKHVEGWDDPRMPTISGLRRRGYTAASIREFCKRIGVTKQDNTIEMASLESCIREDLNENAPRAMAVIDPVKLVIENYQGEGEMVTMPNHPNKPEMGSRQVPFSGEIWIDRSDFREEANKQYKRLVLGKEVRLRNAYVIKAERVEKDAEGNITTIFCTYDADTLSKDPADGRKVKGVIHWVSAAHALPVEIRLYDRLFSVPNPGAADDFLSVINPESLVIKQGFAEPSLKDAVAGKAFQFEREGYFCLDSRHSTAEKPVFNRTVGLRDTWAKVGE.

Residues 34-44 carry the 'HIGH' region motif; that stretch reads PEPNGYLHIGH. ATP contacts are provided by residues 35 to 37 and 41 to 47; these read EPN and HIGHAKS. Residues Asp67 and Tyr212 each contribute to the L-glutamine site. ATP is bound by residues Thr231, 261-262, and 269-271; these read RL and MSK. The short motif at 268 to 272 is the 'KMSKS' region element; sequence VMSKR. An interaction with tRNA region spans residues 317 to 324; sequence TKQDNTIE.

This sequence belongs to the class-I aminoacyl-tRNA synthetase family. As to quaternary structure, monomer.

It is found in the cytoplasm. It catalyses the reaction tRNA(Gln) + L-glutamine + ATP = L-glutaminyl-tRNA(Gln) + AMP + diphosphate. The polypeptide is Glutamine--tRNA ligase (Escherichia coli O157:H7).